The following is a 559-amino-acid chain: Small ribosomal subunit protein uS3m (559 aa).

The segment at 113–134 (EGTEEERNEVRGRGAGKRVESI) is disordered. A compositionally biased stretch (basic and acidic residues) spans 120-134 (NEVRGRGAGKRVESI).

It belongs to the universal ribosomal protein uS3 family.

It localises to the mitochondrion. The chain is Small ribosomal subunit protein uS3m (RPS3) from Zea mays (Maize).